A 149-amino-acid chain; its full sequence is SsrA-binding protein (149 aa).

The segment at 121–149 (GKGEHDKRDTIKDREGKREVERAMKSRSR) is disordered.

This sequence belongs to the SmpB family.

It is found in the cytoplasm. Its function is as follows. Required for rescue of stalled ribosomes mediated by trans-translation. Binds to transfer-messenger RNA (tmRNA), required for stable association of tmRNA with ribosomes. tmRNA and SmpB together mimic tRNA shape, replacing the anticodon stem-loop with SmpB. tmRNA is encoded by the ssrA gene; the 2 termini fold to resemble tRNA(Ala) and it encodes a 'tag peptide', a short internal open reading frame. During trans-translation Ala-aminoacylated tmRNA acts like a tRNA, entering the A-site of stalled ribosomes, displacing the stalled mRNA. The ribosome then switches to translate the ORF on the tmRNA; the nascent peptide is terminated with the 'tag peptide' encoded by the tmRNA and targeted for degradation. The ribosome is freed to recommence translation, which seems to be the essential function of trans-translation. This chain is SsrA-binding protein, found in Polaromonas sp. (strain JS666 / ATCC BAA-500).